A 218-amino-acid chain; its full sequence is MRLILLGPPGAGKGTQAAFVTQHFAIPQISTGDMLRAAVKQGTPLGQEAKKVMDAGGLVSDEIIIGLVQDRLKQPDCANGYLFDGFPRTIPQADALKSAGVALDYVVEIEVPEDDIIERMSGRRVHPASGRSYHVRFNPPKQEGLDDVTGEPLVQRDDDREDTVRNRLAVYQKQTRPLVDYYASWAQAGDGKAPKYRKISGVGAVDDIKARLFQALAS.

An ATP-binding site is contributed by 10–15 (GAGKGT). The tract at residues 30–59 (STGDMLRAAVKQGTPLGQEAKKVMDAGGLV) is NMP. AMP-binding positions include Thr-31, Arg-36, 57-59 (GLV), 85-88 (GFPR), and Gln-92. An LID region spans residues 122 to 159 (GRRVHPASGRSYHVRFNPPKQEGLDDVTGEPLVQRDDD). ATP-binding positions include Arg-123 and 132–133 (SY). 2 residues coordinate AMP: Arg-156 and Arg-167. Gly-203 is a binding site for ATP.

This sequence belongs to the adenylate kinase family. Monomer.

The protein localises to the cytoplasm. It carries out the reaction AMP + ATP = 2 ADP. Its pathway is purine metabolism; AMP biosynthesis via salvage pathway; AMP from ADP: step 1/1. Functionally, catalyzes the reversible transfer of the terminal phosphate group between ATP and AMP. Plays an important role in cellular energy homeostasis and in adenine nucleotide metabolism. The protein is Adenylate kinase of Bordetella petrii (strain ATCC BAA-461 / DSM 12804 / CCUG 43448).